The chain runs to 473 residues: Probable ribonuclease FAU-1 (473 aa).

It belongs to the FAU-1 family.

Functionally, probable RNase involved in rRNA stability through maturation and/or degradation of precursor rRNAs. Binds to RNA in loop regions with AU-rich sequences. This Hyperthermus butylicus (strain DSM 5456 / JCM 9403 / PLM1-5) protein is Probable ribonuclease FAU-1.